A 274-amino-acid polypeptide reads, in one-letter code: Ribosomal RNA small subunit methyltransferase A (274 aa).

S-adenosyl-L-methionine-binding residues include Asn-20, Leu-22, Gly-47, Glu-68, Asp-90, and Asn-110.

It belongs to the class I-like SAM-binding methyltransferase superfamily. rRNA adenine N(6)-methyltransferase family. RsmA subfamily.

The protein localises to the cytoplasm. The enzyme catalyses adenosine(1518)/adenosine(1519) in 16S rRNA + 4 S-adenosyl-L-methionine = N(6)-dimethyladenosine(1518)/N(6)-dimethyladenosine(1519) in 16S rRNA + 4 S-adenosyl-L-homocysteine + 4 H(+). Functionally, specifically dimethylates two adjacent adenosines (A1518 and A1519) in the loop of a conserved hairpin near the 3'-end of 16S rRNA in the 30S particle. May play a critical role in biogenesis of 30S subunits. The sequence is that of Ribosomal RNA small subunit methyltransferase A from Chlorobaculum parvum (strain DSM 263 / NCIMB 8327) (Chlorobium vibrioforme subsp. thiosulfatophilum).